A 617-amino-acid chain; its full sequence is 1-deoxy-D-xylulose-5-phosphate synthase (617 aa).

Residues H76 and 117-119 (GHS) contribute to the thiamine diphosphate site. Residue D148 participates in Mg(2+) binding. Thiamine diphosphate is bound by residues 149-150 (GA), N177, Y285, and E366. N177 contributes to the Mg(2+) binding site.

The protein belongs to the transketolase family. DXPS subfamily. Homodimer. Mg(2+) serves as cofactor. The cofactor is thiamine diphosphate.

It carries out the reaction D-glyceraldehyde 3-phosphate + pyruvate + H(+) = 1-deoxy-D-xylulose 5-phosphate + CO2. It functions in the pathway metabolic intermediate biosynthesis; 1-deoxy-D-xylulose 5-phosphate biosynthesis; 1-deoxy-D-xylulose 5-phosphate from D-glyceraldehyde 3-phosphate and pyruvate: step 1/1. Functionally, catalyzes the acyloin condensation reaction between C atoms 2 and 3 of pyruvate and glyceraldehyde 3-phosphate to yield 1-deoxy-D-xylulose-5-phosphate (DXP). The chain is 1-deoxy-D-xylulose-5-phosphate synthase from Mannheimia succiniciproducens (strain KCTC 0769BP / MBEL55E).